A 308-amino-acid polypeptide reads, in one-letter code: MITFLPIIFSILVVFTFVIGNFANGFIALVNSIEWVKRQKISFADQILTALAVSRVGLLWILLLNWYSTVLNPAFYSVEVRTIAYNLWAVINHFSNWLATSLSIFYLLKIANFSNLIFLHLRRRVKSVVLVILWGPLLFLVCHLFVVNMNEIIQTKEYEGNMTWKSKLRSAMYLSNTTVTILANLVPFILTLISFLLLICSLCKHLKKMQLRDKGSQDPSTKVHIKALQTVISLSLCAIYFLSIMISSWSLGRVENKAIFMFCKAIRFSYPSAHAFILIWGNKKLKQTLLSVLWNVRYCVKGQKLQSP.

Residue methionine 1 is a topological domain, extracellular. The chain crosses the membrane as a helical span at residues 2-22 (ITFLPIIFSILVVFTFVIGNF). The Cytoplasmic segment spans residues 23–46 (ANGFIALVNSIEWVKRQKISFADQ). Residues 47-67 (ILTALAVSRVGLLWILLLNWY) form a helical membrane-spanning segment. Topologically, residues 68–86 (STVLNPAFYSVEVRTIAYN) are extracellular. The helical transmembrane segment at 87–107 (LWAVINHFSNWLATSLSIFYL) threads the bilayer. Over 108-126 (LKIANFSNLIFLHLRRRVK) the chain is Cytoplasmic. Residues 127–147 (SVVLVILWGPLLFLVCHLFVV) traverse the membrane as a helical segment. Residues 148–178 (NMNEIIQTKEYEGNMTWKSKLRSAMYLSNTT) are Extracellular-facing. N-linked (GlcNAc...) asparagine glycosylation is found at asparagine 161 and asparagine 176. The helical transmembrane segment at 179 to 199 (VTILANLVPFILTLISFLLLI) threads the bilayer. The Cytoplasmic portion of the chain corresponds to 200-229 (CSLCKHLKKMQLRDKGSQDPSTKVHIKALQ). The helical transmembrane segment at 230-249 (TVISLSLCAIYFLSIMISSW) threads the bilayer. Residues 250-258 (SLGRVENKA) lie on the Extracellular side of the membrane. A helical transmembrane segment spans residues 259–279 (IFMFCKAIRFSYPSAHAFILI). The Cytoplasmic portion of the chain corresponds to 280–308 (WGNKKLKQTLLSVLWNVRYCVKGQKLQSP).

This sequence belongs to the G-protein coupled receptor T2R family.

It is found in the membrane. The protein resides in the cell projection. It localises to the cilium membrane. Its function is as follows. Gustducin-coupled receptor immplicated in the perception of bitter compounds in the oral cavity and the gastrointestinal tract. Signals through PLCB2 and the calcium-regulated cation channel TRPM5. Activated by the sulfonyl amide sweeteners saccharin and acesulfame K. In airway epithelial cells, binding of bitter compounds increases the intracellular calcium ion concentration and stimulates ciliary beat frequency. May act as chemosensory receptors in airway epithelial cells to detect and eliminate potential noxious agents from the airways. The chain is Taste receptor type 2 member 43 (TAS2R43) from Macaca mulatta (Rhesus macaque).